The chain runs to 81 residues: Cytochrome b559 subunit alpha (81 aa).

A helical transmembrane segment spans residues 21-35 (VIHSITIPMLFIAGW). His-23 is a binding site for heme.

Belongs to the PsbE/PsbF family. In terms of assembly, heterodimer of an alpha subunit and a beta subunit. PSII is composed of 1 copy each of membrane proteins PsbA, PsbB, PsbC, PsbD, PsbE, PsbF, PsbH, PsbI, PsbJ, PsbK, PsbL, PsbM, PsbT, PsbX, PsbY, PsbZ, Psb30/Ycf12, peripheral proteins PsbO, CyanoQ (PsbQ), PsbU, PsbV and a large number of cofactors. It forms dimeric complexes. Heme b serves as cofactor.

Its subcellular location is the cellular thylakoid membrane. This b-type cytochrome is tightly associated with the reaction center of photosystem II (PSII). PSII is a light-driven water:plastoquinone oxidoreductase that uses light energy to abstract electrons from H(2)O, generating O(2) and a proton gradient subsequently used for ATP formation. It consists of a core antenna complex that captures photons, and an electron transfer chain that converts photonic excitation into a charge separation. This chain is Cytochrome b559 subunit alpha, found in Picosynechococcus sp. (strain ATCC 27264 / PCC 7002 / PR-6) (Agmenellum quadruplicatum).